Here is a 338-residue protein sequence, read N- to C-terminus: Deoxyhypusine hydroxylase (338 aa).

5 HEAT-like PBS-type repeats span residues L71–D97, C104–D130, Q200–D233, F238–N264, and V271–D298. Fe cation contacts are provided by H73, E74, H106, and E107. Residues H240, E241, H273, and E274 each coordinate Fe cation.

The protein belongs to the deoxyhypusine hydroxylase family. It depends on Fe(2+) as a cofactor.

The protein localises to the cytoplasm. The protein resides in the nucleus. The enzyme catalyses [eIF5A protein]-deoxyhypusine + AH2 + O2 = [eIF5A protein]-hypusine + A + H2O. It functions in the pathway protein modification; eIF5A hypusination. Catalyzes the hydroxylation of the N(6)-(4-aminobutyl)-L-lysine intermediate to form hypusine, an essential post-translational modification only found in mature eIF-5A factor. This chain is Deoxyhypusine hydroxylase (lia1), found in Aspergillus niger (strain ATCC MYA-4892 / CBS 513.88 / FGSC A1513).